Here is a 325-residue protein sequence, read N- to C-terminus: Peroxidase RIP1 (325 aa).

Positions Met1–Ser21 are cleaved as a signal peptide. 4 disulfides stabilise this stretch: Cys38-Cys118, Cys71-Cys76, Cys125-Cys321, and Cys206-Cys231. The active-site Proton acceptor is the His69. Residues Asp70, Val73, Gly75, Asp77, and Ser79 each contribute to the Ca(2+) site. Residue Asn87 is glycosylated (N-linked (GlcNAc...) asparagine). Pro169 serves as a coordination point for substrate. Asn174 is a glycosylation site (N-linked (GlcNAc...) asparagine). His199 contacts heme b. Residue Thr200 coordinates Ca(2+). An N-linked (GlcNAc...) asparagine glycan is attached at Asn215. The Ca(2+) site is built by Asp244, Thr246, and Glu251.

It belongs to the peroxidase family. Classical plant (class III) peroxidase subfamily. The cofactor is heme b. Ca(2+) is required as a cofactor. In terms of tissue distribution, expressed in the differentiating root epidermis following inoculation with the bacterial symbiont Sinorhizobium meliloti.

The protein resides in the secreted. The catalysed reaction is 2 a phenolic donor + H2O2 = 2 a phenolic radical donor + 2 H2O. Its function is as follows. Removal of H(2)O(2), oxidation of toxic reductants, biosynthesis and degradation of lignin, suberization, auxin catabolism, response to environmental stresses such as wounding, pathogen attack and oxidative stress. These functions might be dependent on each isozyme/isoform in each plant tissue. The chain is Peroxidase RIP1 from Medicago truncatula (Barrel medic).